Reading from the N-terminus, the 1060-residue chain is Isoleucine--tRNA ligase (1060 aa).

Residues Pro55–His65 carry the 'HIGH' region motif. The short motif at Lys608–His612 is the 'KMSKS' region element. An ATP-binding site is contributed by Lys611.

Belongs to the class-I aminoacyl-tRNA synthetase family. IleS type 2 subfamily. In terms of assembly, monomer. It depends on Zn(2+) as a cofactor.

It is found in the cytoplasm. The catalysed reaction is tRNA(Ile) + L-isoleucine + ATP = L-isoleucyl-tRNA(Ile) + AMP + diphosphate. Functionally, catalyzes the attachment of isoleucine to tRNA(Ile). As IleRS can inadvertently accommodate and process structurally similar amino acids such as valine, to avoid such errors it has two additional distinct tRNA(Ile)-dependent editing activities. One activity is designated as 'pretransfer' editing and involves the hydrolysis of activated Val-AMP. The other activity is designated 'posttransfer' editing and involves deacylation of mischarged Val-tRNA(Ile). This is Isoleucine--tRNA ligase from Thermobifida fusca (strain YX).